Consider the following 472-residue polypeptide: ATP synthase subunit beta (472 aa).

Residue 156–163 (GGAGVGKT) participates in ATP binding.

It belongs to the ATPase alpha/beta chains family. In terms of assembly, F-type ATPases have 2 components, CF(1) - the catalytic core - and CF(0) - the membrane proton channel. CF(1) has five subunits: alpha(3), beta(3), gamma(1), delta(1), epsilon(1). CF(0) has three main subunits: a(1), b(2) and c(9-12). The alpha and beta chains form an alternating ring which encloses part of the gamma chain. CF(1) is attached to CF(0) by a central stalk formed by the gamma and epsilon chains, while a peripheral stalk is formed by the delta and b chains.

Its subcellular location is the cell membrane. It carries out the reaction ATP + H2O + 4 H(+)(in) = ADP + phosphate + 5 H(+)(out). Its function is as follows. Produces ATP from ADP in the presence of a proton gradient across the membrane. The catalytic sites are hosted primarily by the beta subunits. This Symbiobacterium thermophilum (strain DSM 24528 / JCM 14929 / IAM 14863 / T) protein is ATP synthase subunit beta.